Here is a 432-residue protein sequence, read N- to C-terminus: Adenosylhomocysteinase (432 aa).

The segment at 1-24 is disordered; that stretch reads MSAYSPLSAQLDADTDVDVESTRT. The substrate site is built by aspartate 137 and glutamate 162. 163-165 serves as a coordination point for NAD(+); that stretch reads TTT. Substrate-binding residues include lysine 192 and aspartate 196. NAD(+) is bound by residues asparagine 197, 226 to 231, glutamate 249, asparagine 284, 305 to 307, and asparagine 352; these read GYGYCG and AGH.

The protein belongs to the adenosylhomocysteinase family. The cofactor is NAD(+).

Its subcellular location is the cytoplasm. It carries out the reaction S-adenosyl-L-homocysteine + H2O = L-homocysteine + adenosine. The protein operates within amino-acid biosynthesis; L-homocysteine biosynthesis; L-homocysteine from S-adenosyl-L-homocysteine: step 1/1. Its function is as follows. May play a key role in the regulation of the intracellular concentration of adenosylhomocysteine. This chain is Adenosylhomocysteinase, found in Haloquadratum walsbyi (strain DSM 16854 / JCM 12705 / C23).